A 451-amino-acid polypeptide reads, in one-letter code: Tubulin alpha-1 chain (451 aa).

Gln11 provides a ligand contact to GTP. Residue Lys40 is modified to N6-acetyllysine. Glu71, Thr145, Thr179, Asn206, and Asn228 together coordinate GTP. Glu71 provides a ligand contact to Mg(2+). Glu254 is an active-site residue. A disordered region spans residues 429-451; it reads EKDYEEVGAESGEGEEGDEGEEY. Acidic residues predominate over residues 431-451; the sequence is DYEEVGAESGEGEEGDEGEEY.

This sequence belongs to the tubulin family. Dimer of alpha and beta chains. A typical microtubule is a hollow water-filled tube with an outer diameter of 25 nm and an inner diameter of 15 nM. Alpha-beta heterodimers associate head-to-tail to form protofilaments running lengthwise along the microtubule wall with the beta-tubulin subunit facing the microtubule plus end conferring a structural polarity. Microtubules usually have 13 protofilaments but different protofilament numbers can be found in some organisms and specialized cells. Requires Mg(2+) as cofactor. Undergoes a tyrosination/detyrosination cycle, the cyclic removal and re-addition of a C-terminal tyrosine residue by the enzymes tubulin tyrosine carboxypeptidase (TTCP) and tubulin tyrosine ligase (TTL), respectively. In terms of processing, acetylation of alpha chains at Lys-40 stabilizes microtubules and affects affinity and processivity of microtubule motors. This modification has a role in multiple cellular functions, ranging from cell motility, cell cycle progression or cell differentiation to intracellular trafficking and signaling.

The protein resides in the cytoplasm. Its subcellular location is the cytoskeleton. The catalysed reaction is GTP + H2O = GDP + phosphate + H(+). Tubulin is the major constituent of microtubules, a cylinder consisting of laterally associated linear protofilaments composed of alpha- and beta-tubulin heterodimers. Microtubules grow by the addition of GTP-tubulin dimers to the microtubule end, where a stabilizing cap forms. Below the cap, tubulin dimers are in GDP-bound state, owing to GTPase activity of alpha-tubulin. The chain is Tubulin alpha-1 chain (TUBA1) from Anemia phyllitidis (Fern).